We begin with the raw amino-acid sequence, 395 residues long: Putative nickel insertion protein (395 aa).

Belongs to the LarC family.

This Archaeoglobus fulgidus (strain ATCC 49558 / DSM 4304 / JCM 9628 / NBRC 100126 / VC-16) protein is Putative nickel insertion protein.